The primary structure comprises 359 residues: 3-dehydroquinate synthase (359 aa).

Residues 71-76 (DGEAYK), 105-109 (GVVGD), 129-130 (TT), Lys-142, and Lys-151 contribute to the NAD(+) site. Glu-184, His-247, and His-264 together coordinate Zn(2+).

The protein belongs to the sugar phosphate cyclases superfamily. Dehydroquinate synthase family. Co(2+) is required as a cofactor. Requires Zn(2+) as cofactor. The cofactor is NAD(+).

Its subcellular location is the cytoplasm. It carries out the reaction 7-phospho-2-dehydro-3-deoxy-D-arabino-heptonate = 3-dehydroquinate + phosphate. It participates in metabolic intermediate biosynthesis; chorismate biosynthesis; chorismate from D-erythrose 4-phosphate and phosphoenolpyruvate: step 2/7. Its function is as follows. Catalyzes the conversion of 3-deoxy-D-arabino-heptulosonate 7-phosphate (DAHP) to dehydroquinate (DHQ). This chain is 3-dehydroquinate synthase, found in Burkholderia lata (strain ATCC 17760 / DSM 23089 / LMG 22485 / NCIMB 9086 / R18194 / 383).